A 410-amino-acid polypeptide reads, in one-letter code: F-box/WD-40 repeat-containing protein 1 (410 aa).

Positions 32–79 (SKECSLLPFELFEEILCRVPTKSLLRLKLTCKRWLALFNDKRFIYKHL) constitute an F-box domain. WD repeat units follow at residues 109–150 (PNKF…VRWI) and 269–309 (DVHN…NGVS).

This chain is F-box/WD-40 repeat-containing protein 1 (FBW1), found in Arabidopsis thaliana (Mouse-ear cress).